The chain runs to 2593 residues: MMLNLTANPSAGTTVTVDLPADHPALNQFKTAFPGFEVVASNRSSNDHAAARAFSHLATKWIERDIDGRQVIVADIGSAPARRVGAPDNVTYHSVCPRKCAEDPERLASYARKLVRAVEKGDGHLVSDRITDLKDVLENPDTSLETTSICLNDDVSCKVKADIAVYQDVYAVDAPSTIYAQADKGTRVVYWIGFEPFVFHTDAMAGSFPLYDANWSDSAVLAAKNLPLCYSGLSEDSIKWRFRFRDKPLVPSGEIHYSVGSTHYVEDRDKLKSWHLPSTFHFVAPNKYTCRCDTVVSCGGYVVKKITICEGIVGRPANEELATSYHRDGVVVTKFSDTINHEQVSFPVVTYIPAVICDQMTAMTADPVKYPDVVKLLVGLNQRIVVNGTTVRNVNSMDNSLIPVFARALCSWADEARRDMEDEQDMYGVTSVTTWICICRAYDKRQQHTFYRRPKQSSGIYVPAKFTGSLRASLSATYLNLPLKQLLLNTLKRAIKPGDQALADETEARAHDAAEVHELTEEEGRQQAANPSYIADVLGQDDEEEVDDGMSNVDLGEEDGVGSTIIDCQRGTVKVITAFGDNTMGEYLVLSPVTVLRTRKLAVLLGPLAEEVMQYVHKGRTGRYAIEKNNLKVLIPTGVSLKTAHFQALTESATLTYNDYLFTCRTLDQLATRGSAKNTDEVYYKLVDAAKAKDEYVYELSSKQCVKKEDATGTVLQGDICNPPYHQFAFEALRKRPAHTHDVHTIGIYGVPGAGKTAIITTEVTTRDLVASGKKENCEDIKRCVLERRGLKIAARTVDSLLYGAYRGAVDTLYVDEAYACHSGTLLALIAAVRPTGKVVLCGDPKQVGCVNQLQMRMHYNHEISDRVLRKNISRRCTHTLTAIVSNLNYEGRMKTTNPCKKPVLIDTTGSTKPDKEALVLTCFRGWVKDLKILYPHNELMTAAASQGLTREKVYAVRCRVTSNPLYEPTSEHITVLLTRTNDELVWKTLPNDPLIPILSKPPKGDYSATMEDWEDEHNGILAALREACVPRMNFAHGKRNTCWAVTSSRVLHEAGVLITPEDFNRIFPAFREDKPHSALAALDAVAALVWGLDTSSGILSGKGSFMRLENSHWSNSNRGYEYGLNLDALEGYEIANPRMIKALKQRRGRECYDIETGKLVPMDPGRVQVPINRVVPHVLVDTSAAAKPGFLENRLSVDRWDQVHSFKTRAAVKFAELTKRVSYNSVLDLGAARGGVTDYCVKKGKTVTCVSEQWDSKPRGAVVITADINGPLNNLGIFDLVFCDAAGPRRYHHYAQCEDHARRSTSACKHGVERTAKGGVFIVKAYGMADRRTERAVECTARYFKSVSVEKPVSSRITNVEVFFKFSGRCRPHARSIAHLGPQLTDIYARTRKAYKMLARGSVADKVKVAEILNSMVGAAPGYRVLNKNIITAEEEVLVNAANSNGRPGDGVCGALYGAFGDAFPNGAIGAGNAVLVRGLEATIIHAAGADFREVDEETGARQLRAAYRAAATLVTANGITSAAIPLLSTHIFSNGRNRLEQSFGALVEAFDTTECDVTIYCLANNMAARIQQLIDDHAREEFDEEVVVEEEEEHEANAMCDTETLSSFGDETVWVPKHSTLAGRPGYSATYGDRRSLFVGTKFHRAAVAMSSIEAAWPRTKEANAKLIEYIRGQHLVDVLKSCPVNDIPVGRPPSSLPCGCIYAMTPERVTVLKQRPQEGFVVCSAFKLPLTNIQDVTKVECTVRAPAEEPRPVRYLQERRPVQAAARQPRPAIVAASVAGTATSRRTPAPGSVQVRLLPPRDGTVSRSSRTSSQSSVTSSAGPIMPVPRRAPVAPAASLAGSVHSHSVRSAPAILRAASTGARSVRSVQSGLTGHRDDAVSVAGSVRQPSGPPSSVSTPAAPRGLTREQFGAVRARARRDLELEGSEHGSQASFRSGSLVVGSTASSYSQRPDDQDTGSEPSGRGAAVRTRRRGQRDGPGGYIFSSDQGTAHLSQHNTQTNNTTEVLMRTSVLPSNDHGTPDLLAEMKKRLAYQMRPTQKNKSRYLSAKVHNMKHKIVQCLQRGAGHYLREQHALPLWKNTFPKPRYSDACVVKFESVNTAIVAANMFIGCNYPTLSSFGVTDKYDAYLDMVDGLNCNLDTVTFEPAKVRSLPKKSKYNQPLIQSQVPGPMASTLQSILMAATKRNCNVTQMRELPTMDSAAMNVEAFKKFACKDTDLWTEFAEKPVRLSPGQIEEYVFHLQGAKANVMHSRVEAACPDLSEVAMDRFTLDMKRDVKVTPGTKHVEERPKVQVIQAADPMATAYLCAIHRELVRRLKAVLKPSIHVLFDMSSEDFDAIVGHGMKLGDKVLETDISSFDKSQDQAMAVTALMLLEDLGVEEDLLTLIEASFGDITSVHLPTGTRFQFGSMMKSGLFLTLFVNTLLNITIAARVLREQLADTRCAAFIGDDNVITGVVSDDMMVARCASWLNMEVKIMEMEIGDRSPYFCGGFLLLDTVTGTVSRVSDPVKRLMKMGKPALNDPETDVDRCRALREEVESWYRVGIQWPLQVAAATRYGVNHLPLATMAMATLAQDLRSYLGARGEYVSLYA.

In terms of domain architecture, Alphavirus-like MT spans 39 to 275 (VASNRSSNDH…EDRDKLKSWH (237 aa)). The segment at 260-279 (GSTHYVEDRDKLKSWHLPST) is nsP1 membrane-binding. S-palmitoyl cysteine; by host attachment occurs at residues Cys437 and Cys439. A (+)RNA virus helicase ATP-binding domain is found at 718–871 (GDICNPPYHQ…HEISDRVLRK (154 aa)). Position 750-757 (750-757 (GVPGAGKT)) interacts with a ribonucleoside 5'-triphosphate. One can recognise a (+)RNA virus helicase C-terminal domain in the interval 872 to 1020 (NISRRCTHTL…MEDWEDEHNG (149 aa)). Residues 1034 to 1054 (NFAHGKRNTCWAVTSSRVLHE) form a nucleolus localization signal region. The Peptidase C9 domain maps to 1034-1392 (NFAHGKRNTC…PQLTDIYART (359 aa)). The active-site For cysteine protease nsP2 activity is the Cys1043. The short motif at 1088–1097 (ALVWGLDTSS) is the Nuclear export signal element. The active-site For cysteine protease nsP2 activity is His1113. The short motif at 1218 to 1222 (LTKRV) is the Nuclear localization signal element. One can recognise a Macro domain in the interval 1421-1580 (APGYRVLNKN…RIQQLIDDHA (160 aa)). Residues Asn1444, Gly1452, Ile1533, and Phe1534 each coordinate ADP-D-ribose. Positions 1701, 1703, 1726, and 1744 each coordinate Zn(2+). 3 disordered regions span residues 1781 to 1832 (VAGT…PVPR), 1860 to 1912 (AAST…TREQ), and 1926 to 1985 (LEGS…PGGY). The segment covering 1808 to 1823 (VSRSSRTSSQSSVTSS) has biased composition (low complexity). Over residues 1931-1953 (HGSQASFRSGSLVVGSTASSYSQ) the composition is skewed to polar residues. Residues 2349–2464 (GDKVLETDIS…ITGVVSDDMM (116 aa)) form the RdRp catalytic domain.

As to quaternary structure, interacts with non-structural protein 3. Interacts with RNA-directed RNA polymerase nsP4. Interacts with protease nsP2. interacts with itself. Interacts with mRNA-capping enzyme nsP1. Interacts with host DDX1. Interacts with host DDX3. In terms of assembly, interacts with mRNA-capping enzyme nsP1. Interacts with protease nsP2. Interacts with itself. As to quaternary structure, interacts with RNA-directed RNA polymerase nsP4. Interacts with mRNA-capping enzyme nsP1. Interacts with KPNA1/karyopherin-alpha1; this interaction probably allows the active transport of protease nsP2 into the host nucleus. Mg(2+) is required as a cofactor. The cofactor is Mn(2+). In terms of processing, specific enzymatic cleavages in vivo yield mature proteins. The processing of the polyprotein is temporally regulated. In early stages (1.7 hpi), P1234 is first cleaved in trans through its nsP2 protease activity, releasing P123 and nsP4, which associate to form the early replication complex. At the same time, P1234 is also cut at the nsP1/nsP2 site early in infection but with lower efficiency. After replication of the viral minus-strand RNAs (4 hpi), the polyproteins are cut at the nsP1/nsP2 and nsP2/nsP3 sites very efficiently, preventing accumulation of P123 and P1234 and allowing the formation of the late replication complex. NsP3/nsP4 site is not cleaved anymore and P34 is produced rather than nsP4. Specific enzymatic cleavages in vivo yield mature proteins. The processing of the polyprotein is temporally regulated. In early stages (1.7 hpi), P123 is cleaved at the nsP1/nsP2 site with low efficiency. After replication of the viral minus-strand RNAs (4 hpi), the polyproteins are cut at the nsP1/nsP2 and nsP2/nsP3 sites very efficiently, preventing accumulation of P123 and allowing the formation of the late replication complex. Post-translationally, palmitoylated by host palmitoyltransferases ZDHHC2 and ZDHHC19. In terms of processing, phosphorylated by host on serines and threonines. Ubiquitinated; targets the protein for rapid degradation via the ubiquitin system. Nsp4 is present in extremely low quantities due to low frequency of translation through the amber stop-codon and the degradation by the ubiquitin pathway.

It localises to the host cytoplasmic vesicle membrane. It is found in the host cell membrane. Its subcellular location is the host cell projection. The protein resides in the host filopodium. The protein localises to the host nucleus. It localises to the host cytoplasm. The enzyme catalyses GTP + S-adenosyl-L-methionine = N(7)-methyl-GTP + S-adenosyl-L-homocysteine. It carries out the reaction N(7)-methyl-GTP + L-histidyl-[protein] = N(tele)-(N(7)-methylguanosine 5'-phospho)-L-histidyl-[protein] + diphosphate. It catalyses the reaction N(tele)-(N(7)-methylguanosine 5'-phospho)-L-histidyl-[protein] + a 5'-end diphospho-(purine-ribonucleoside) in mRNA + H(+) = a 5'-end (N(7)-methyl 5'-triphosphoguanosine)-(purine-ribonucleoside) in mRNA + L-histidyl-[protein]. The catalysed reaction is a 5'-end triphospho-ribonucleoside in mRNA + H2O = a 5'-end diphospho-ribonucleoside in mRNA + phosphate + H(+). The enzyme catalyses a ribonucleoside 5'-triphosphate + H2O = a ribonucleoside 5'-diphosphate + phosphate + H(+). It carries out the reaction ATP + H2O = ADP + phosphate + H(+). It catalyses the reaction RNA(n) + a ribonucleoside 5'-triphosphate = RNA(n+1) + diphosphate. The catalysed reaction is 4-O-(ADP-D-ribosyl)-L-aspartyl-[protein] + H2O = L-aspartyl-[protein] + ADP-D-ribose + H(+). The enzyme catalyses 5-O-(ADP-D-ribosyl)-L-glutamyl-[protein] + H2O = L-glutamyl-[protein] + ADP-D-ribose + H(+). It carries out the reaction RNA(n) + ATP = RNA(n)-3'-adenine ribonucleotide + diphosphate. It catalyses the reaction ADP-alpha-D-ribose 1''-phosphate + H2O = ADP-D-ribose + phosphate. Its function is as follows. Inactive precursor of the viral replicase, which is activated by cleavages carried out by the viral protease nsP2. Functionally, the early replication complex formed by the polyprotein P123 and nsP4 synthesizes minus-strand RNAs. As soon P123 is cleaved into mature proteins, the plus-strand RNAs synthesis begins. In terms of biological role, the early replication complex formed by the polyprotein P123 and nsP4 synthesizes minus-strand RNAs. Polyprotein P123 is a short-lived polyprotein that accumulates during early stage of infection. As soon P123 is cleaved into mature proteins, the plus-strand RNAs synthesis begins. Cytoplasmic capping enzyme that catalyzes two virus-specific reactions: methyltransferase and nsP1 guanylyltransferase. mRNA-capping is necessary since all viral RNAs are synthesized in the cytoplasm, and host capping enzymes are restricted to the nucleus. The enzymatic reaction involves a covalent link between 7-methyl-GMP and nsP1, whereas eukaryotic capping enzymes form a covalent complex only with GMP. nsP1 capping consists in the following reactions: GTP is first methylated into 7-methyl-GMP and then is covalently linked to nsP1 to form the m7GMp-nsP1 complex from which 7-methyl-GMP complex is transferred to the mRNA to create the cap structure. NsP1 is also needed for the initiation of the minus-strand RNAs synthesis. Probably serves as a membrane anchor for the replication complex composed of nsP1-nsP4. Palmitoylated nsP1 is remodeling host cell cytoskeleton, and induces filopodium-like structure formation at the surface of the host cell. Its function is as follows. Multifunctional protein whose N-terminus is part of the RNA polymerase complex and displays NTPase, RNA triphosphatase and helicase activities. NTPase and RNA triphosphatase are involved in viral RNA capping and helicase keeps a check on the dsRNA replication intermediates. The C-terminus harbors a protease that specifically cleaves the polyproteins and releases the mature proteins. Required for the shutoff of minus-strand RNAs synthesis. Specifically inhibits the host IFN response by promoting the nuclear export of host STAT1. Also inhibits host transcription by inducing the rapid proteasome-dependent degradation of POLR2A, a catalytic subunit of the RNAPII complex. The resulting inhibition of cellular protein synthesis serves to ensure maximal viral gene expression and to evade host immune response. Functionally, seems to be essential for minus-strand RNAs and subgenomic 26S mRNAs synthesis. Displays mono-ADP-ribosylhydrolase activity. ADP-ribosylation is a post-translational modification that controls various processes of the host cell and the virus probably needs to revert it for optimal viral replication. Binds proteins of G3BP family and sequesters them into the viral RNA replication complexes thereby inhibiting the formation of host stress granules on viral mRNAs. The nsp3-G3BP complexes bind viral RNAs and probably orchestrate the assembly of viral replication complexes, thanks to the ability of G3BP family members to self-assemble and bind DNA. In terms of biological role, RNA dependent RNA polymerase. Replicates genomic and antigenomic RNA by recognizing replications specific signals. The early replication complex formed by the polyprotein P123 and nsP4 synthesizes minus-strand RNAs. The late replication complex composed of fully processed nsP1-nsP4 is responsible for the production of genomic and subgenomic plus-strand RNAs. In Alphavirus salmon subtype 2 (SAV2), this protein is Polyprotein P1234.